The sequence spans 60 residues: Large ribosomal subunit protein bL32 (60 aa).

The span at 1 to 16 shows a compositional bias: basic residues; sequence MAVPRRKTSPSRRGMR. The interval 1–60 is disordered; that stretch reads MAVPRRKTSPSRRGMRRSADAIKKPTYVEDKDSGELRRPHHLDLKTGMYKGRQVLKKKES. The segment covering 17-44 has biased composition (basic and acidic residues); it reads RSADAIKKPTYVEDKDSGELRRPHHLDL.

Belongs to the bacterial ribosomal protein bL32 family.

The polypeptide is Large ribosomal subunit protein bL32 (Bradyrhizobium diazoefficiens (strain JCM 10833 / BCRC 13528 / IAM 13628 / NBRC 14792 / USDA 110)).